The following is a 384-amino-acid chain: 4-hydroxy-3-methylbut-2-en-1-yl diphosphate synthase (flavodoxin) (384 aa).

Positions 280, 283, 315, and 322 each coordinate [4Fe-4S] cluster.

The protein belongs to the IspG family. It depends on [4Fe-4S] cluster as a cofactor.

It catalyses the reaction (2E)-4-hydroxy-3-methylbut-2-enyl diphosphate + oxidized [flavodoxin] + H2O + 2 H(+) = 2-C-methyl-D-erythritol 2,4-cyclic diphosphate + reduced [flavodoxin]. It functions in the pathway isoprenoid biosynthesis; isopentenyl diphosphate biosynthesis via DXP pathway; isopentenyl diphosphate from 1-deoxy-D-xylulose 5-phosphate: step 5/6. In terms of biological role, converts 2C-methyl-D-erythritol 2,4-cyclodiphosphate (ME-2,4cPP) into 1-hydroxy-2-methyl-2-(E)-butenyl 4-diphosphate. The sequence is that of 4-hydroxy-3-methylbut-2-en-1-yl diphosphate synthase (flavodoxin) from Parafrankia sp. (strain EAN1pec).